A 430-amino-acid chain; its full sequence is Putative ABC transporter periplasmic-binding protein YcjN (430 aa).

The first 19 residues, 1–19 (MIKSKIVLLSALVSCALIS), serve as a signal peptide directing secretion.

The protein belongs to the bacterial solute-binding protein 1 family.

It is found in the periplasm. Its function is as follows. Probably part of the binding-protein-dependent transport system YcjNOP. In Escherichia coli (strain K12), this protein is Putative ABC transporter periplasmic-binding protein YcjN (ycjN).